The following is a 160-amino-acid chain: Large ribosomal subunit protein eL21 (160 aa).

Basic and acidic residues-rich tracts occupy residues 112-123 and 136-145; these read NDQKKKEAKEKG and REAHFVRTNG. A disordered region spans residues 112 to 145; it reads NDQKKKEAKEKGTWVQLKRQPAPPREAHFVRTNG.

It belongs to the eukaryotic ribosomal protein eL21 family. In terms of assembly, component of the large ribosomal subunit.

The protein resides in the cytoplasm. Its subcellular location is the cytosol. It localises to the endoplasmic reticulum. Functionally, component of the large ribosomal subunit. The ribosome is a large ribonucleoprotein complex responsible for the synthesis of proteins in the cell. In Oryctolagus cuniculus (Rabbit), this protein is Large ribosomal subunit protein eL21 (RPL21).